The chain runs to 184 residues: Adenylate kinase (184 aa).

12–17 lines the ATP pocket; it reads GAGKGT. Residues 32-61 are NMP; the sequence is STGELLRKEIDLDTDLGKQVKDIMNRGELV. Residues Thr33, Arg38, 59–61, 85–88, and Gln92 contribute to the AMP site; these read ELV and GYPR. The interval 126 to 132 is LID; it reads IRGRKDD. Arg127 serves as a coordination point for ATP. 2 residues coordinate AMP: Arg129 and Arg140. Position 168 (Gly168) interacts with ATP.

The protein belongs to the adenylate kinase family. As to quaternary structure, monomer.

The protein resides in the cytoplasm. The enzyme catalyses AMP + ATP = 2 ADP. It functions in the pathway purine metabolism; AMP biosynthesis via salvage pathway; AMP from ADP: step 1/1. In terms of biological role, catalyzes the reversible transfer of the terminal phosphate group between ATP and AMP. Plays an important role in cellular energy homeostasis and in adenine nucleotide metabolism. The polypeptide is Adenylate kinase (Prochlorococcus marinus subsp. pastoris (strain CCMP1986 / NIES-2087 / MED4)).